We begin with the raw amino-acid sequence, 342 residues long: DDB1- and CUL4-associated factor 7 (342 aa).

WD repeat units lie at residues 6-52, 60-100, 108-150, 165-206, 213-252, 257-296, and 303-342; these read KRKE…LVGL, ICRN…VWRV, ECLL…IWGL, HVKT…MFDL, TIIY…ILDV, TPVA…IWDI, and IEDP…ILRV.

It belongs to the WD repeat DCAF7 family. Interacts with DYRK1A, DYRK1B and DIAPH1. Interacts with DDB1. Interacts with ZNF703. Interacts with human adenovirus 5 E1A protein.

The protein resides in the cytoplasm. The protein localises to the nucleus. The protein operates within protein modification; protein ubiquitination. Functionally, involved in craniofacial development. Acts upstream of the EDN1 pathway and is required for formation of the upper jaw equivalent, the palatoquadrate. The activity required for EDN1 pathway function differs between the first and second arches. Associates with DIAPH1 and controls GLI1 transcriptional activity. Could be involved in normal and disease skin development. May function as a substrate receptor for CUL4-DDB1 E3 ubiquitin-protein ligase complex. In Homo sapiens (Human), this protein is DDB1- and CUL4-associated factor 7 (DCAF7).